Reading from the N-terminus, the 628-residue chain is Basal cell adhesion molecule (628 aa).

The N-terminal stretch at 1-31 (MEPPDAPAQARGAPRLLLLAVLLAAHPDAQA) is a signal peptide. Ig-like V-type domains follow at residues 32-142 (EVRL…ARLN) and 147-257 (PEAT…PTFH). The Extracellular portion of the chain corresponds to 32–547 (EVRLSVPPLV…GTVSPQTSQA (516 aa)). 3 disulfide bridges follow: Cys53/Cys125, Cys172/Cys237, and Cys291/Cys337. Ig-like C2-type domains follow at residues 274 to 355 (PSTP…KTLE), 363 to 441 (PLEL…QNFT), and 448 to 541 (PELK…GTVS). The segment at 309–312 (EQEE) is interaction with laminin alpha5. Asn321, Asn377, Asn383, Asn419, and Asn439 each carry an N-linked (GlcNAc...) asparagine glycan. Cys384 and Cys424 form a disulfide bridge. A disulfide bond links Cys473 and Cys522. Residues 548 to 568 (GVAVMAVAVSVGLLLLVVAVF) form a helical membrane-spanning segment. Residues 569–628 (YCVRRKGGPCCRQRREKGAPPPGEPGLSHSGSEQPEQTGLLMGGASGGARGGSGGFGDEC) lie on the Cytoplasmic side of the membrane. The segment at 579 to 628 (CRQRREKGAPPPGEPGLSHSGSEQPEQTGLLMGGASGGARGGSGGFGDEC) is disordered. Ser596 bears the Phosphoserine; by GSK3 mark. Ser598 carries the phosphoserine; by CK2 modification. At Ser600 the chain carries Phosphoserine. Residues 609-628 (LMGGASGGARGGSGGFGDEC) show a composition bias toward gly residues. Phosphoserine; by PKA or PKB/AKT1 is present on Ser621.

As to quaternary structure, homodimer. Interacts with ITGA4:ITGB1. Interacts with spectrins SPTA1 and SPTB1. Post-translationally, epinephrine-stimulated phosphorylation of Ser-621 by PKA enhances adhesion to laminin. Ser-621 can also be phosphorylated by AKT1. As to expression, wide tissue distribution (highest in the pancreas and very low in brain). Closely associated with the basal layer of cells in epithelia and the endothelium of blood vessel walls.

The protein localises to the cell membrane. In terms of biological role, transmembrane glycoprotein that functions as both a receptor and an adhesion molecule playing a crucial role in cell adhesion, motility, migration and invasion. Extracellular domain enables binding to extracellular matrix proteins, such as laminin, integrin and other ligands while its intracellular domain interacts with cytoskeletal proteins like hemoglobin, facilitating cell signal transduction. Serves as a receptor for laminin alpha-5/LAMA5 to promote cell adhesion. Mechanistically, JAK2 induces BCAM phosphorylation and activates its adhesion to laminin by stimulating a Rap1/AKT signaling pathway in the absence of EPOR. This Homo sapiens (Human) protein is Basal cell adhesion molecule (BCAM).